The chain runs to 197 residues: Holliday junction branch migration complex subunit RuvA (197 aa).

A domain I region spans residues 1–64 (MIGHLEGRLR…EDAIQLYGFR (64 aa)). Positions 65–143 (TVAEKDMFLR…VKKGREAEQP (79 aa)) are domain II. The interval 144-145 (AP) is flexible linker. A domain III region spans residues 146 to 197 (AAESSYGDAYSALVNLGYRPAEAEKALGKAIKSLGADPPVEKLLKETLRLLA).

The protein belongs to the RuvA family. Homotetramer. Forms an RuvA(8)-RuvB(12)-Holliday junction (HJ) complex. HJ DNA is sandwiched between 2 RuvA tetramers; dsDNA enters through RuvA and exits via RuvB. An RuvB hexamer assembles on each DNA strand where it exits the tetramer. Each RuvB hexamer is contacted by two RuvA subunits (via domain III) on 2 adjacent RuvB subunits; this complex drives branch migration. In the full resolvosome a probable DNA-RuvA(4)-RuvB(12)-RuvC(2) complex forms which resolves the HJ.

The protein localises to the cytoplasm. Its function is as follows. The RuvA-RuvB-RuvC complex processes Holliday junction (HJ) DNA during genetic recombination and DNA repair, while the RuvA-RuvB complex plays an important role in the rescue of blocked DNA replication forks via replication fork reversal (RFR). RuvA specifically binds to HJ cruciform DNA, conferring on it an open structure. The RuvB hexamer acts as an ATP-dependent pump, pulling dsDNA into and through the RuvAB complex. HJ branch migration allows RuvC to scan DNA until it finds its consensus sequence, where it cleaves and resolves the cruciform DNA. The chain is Holliday junction branch migration complex subunit RuvA from Syntrophobacter fumaroxidans (strain DSM 10017 / MPOB).